Reading from the N-terminus, the 520-residue chain is Transactivator/viroplasmin protein (520 aa).

The interval V486–D520 is disordered.

This sequence belongs to the caulimoviridae viroplasmin family.

The protein localises to the host cytoplasm. Its function is as follows. Enhances the ribosomal termination-reinitiation event leading to the translation of major open reading frames on the polycistronic viral RNAs. The polypeptide is Transactivator/viroplasmin protein (Cauliflower mosaic virus (strain BBC) (CaMV)).